The primary structure comprises 734 residues: Photosystem I P700 chlorophyll a apoprotein A2 (734 aa).

Transmembrane regions (helical) follow at residues 46 to 69, 135 to 158, 175 to 199, 273 to 291, 330 to 353, 369 to 395, 417 to 439, and 517 to 535; these read IFAS…FHVA, LYTG…LHLQ, LNHH…HVAI, IAHH…GHMY, LHFQ…QHMY, AALY…IFFI, AITS…LYVH, and FLVH…LILV. Positions 559 and 568 each coordinate [4Fe-4S] cluster. Transmembrane regions (helical) follow at residues 575–596 and 643–665; these read AFYL…YWHW and LSVW…MFLI. Chlorophyll a-binding residues include His654, Met662, and Tyr670. Trp671 serves as a coordination point for phylloquinone. Residues 707-727 form a helical membrane-spanning segment; it reads LVGLVHFSVGYIFTYAAFLIA.

Belongs to the PsaA/PsaB family. As to quaternary structure, the PsaA/B heterodimer binds the P700 chlorophyll special pair and subsequent electron acceptors. PSI consists of a core antenna complex that captures photons, and an electron transfer chain that converts photonic excitation into a charge separation. The eukaryotic PSI reaction center is composed of at least 11 subunits. It depends on P700 is a chlorophyll a/chlorophyll a' dimer, A0 is one or more chlorophyll a, A1 is one or both phylloquinones and FX is a shared 4Fe-4S iron-sulfur center. as a cofactor.

It is found in the plastid. The protein resides in the chloroplast thylakoid membrane. The enzyme catalyses reduced [plastocyanin] + hnu + oxidized [2Fe-2S]-[ferredoxin] = oxidized [plastocyanin] + reduced [2Fe-2S]-[ferredoxin]. In terms of biological role, psaA and PsaB bind P700, the primary electron donor of photosystem I (PSI), as well as the electron acceptors A0, A1 and FX. PSI is a plastocyanin-ferredoxin oxidoreductase, converting photonic excitation into a charge separation, which transfers an electron from the donor P700 chlorophyll pair to the spectroscopically characterized acceptors A0, A1, FX, FA and FB in turn. Oxidized P700 is reduced on the lumenal side of the thylakoid membrane by plastocyanin. The protein is Photosystem I P700 chlorophyll a apoprotein A2 of Phalaenopsis aphrodite subsp. formosana (Moth orchid).